The following is a 106-amino-acid chain: Large ribosomal subunit protein eL42 (106 aa).

This sequence belongs to the eukaryotic ribosomal protein eL42 family.

The chain is Large ribosomal subunit protein eL42 (RPL44) from Cyberlindnera jadinii (Torula yeast).